Here is a 298-residue protein sequence, read N- to C-terminus: Ribosomal protein L11 methyltransferase (298 aa).

Residues Thr152, Gly173, Asp195, and Asn234 each contribute to the S-adenosyl-L-methionine site.

It belongs to the methyltransferase superfamily. PrmA family.

Its subcellular location is the cytoplasm. The enzyme catalyses L-lysyl-[protein] + 3 S-adenosyl-L-methionine = N(6),N(6),N(6)-trimethyl-L-lysyl-[protein] + 3 S-adenosyl-L-homocysteine + 3 H(+). In terms of biological role, methylates ribosomal protein L11. This Ralstonia pickettii (strain 12J) protein is Ribosomal protein L11 methyltransferase.